The sequence spans 510 residues: Maturase K (510 aa).

It belongs to the intron maturase 2 family. MatK subfamily.

It is found in the plastid. In terms of biological role, usually encoded in the trnK tRNA gene intron. Probably assists in splicing its own and other chloroplast group II introns. In Aneura mirabilis (Parasitic liverwort), this protein is Maturase K.